The sequence spans 277 residues: Diaminopimelate epimerase (277 aa).

Substrate is bound by residues asparagine 11 and asparagine 62. The active-site Proton donor is cysteine 71. Substrate is bound by residues 72-73, asparagine 160, asparagine 193, and 211-212; these read GN and ER. Cysteine 220 serves as the catalytic Proton acceptor. 221–222 is a binding site for substrate; sequence GT.

The protein belongs to the diaminopimelate epimerase family. Homodimer.

Its subcellular location is the cytoplasm. The enzyme catalyses (2S,6S)-2,6-diaminopimelate = meso-2,6-diaminopimelate. It participates in amino-acid biosynthesis; L-lysine biosynthesis via DAP pathway; DL-2,6-diaminopimelate from LL-2,6-diaminopimelate: step 1/1. In terms of biological role, catalyzes the stereoinversion of LL-2,6-diaminopimelate (L,L-DAP) to meso-diaminopimelate (meso-DAP), a precursor of L-lysine. This Methanococcus maripaludis (strain C5 / ATCC BAA-1333) protein is Diaminopimelate epimerase.